Consider the following 968-residue polypeptide: RNA polymerase-associated protein RapA (968 aa).

A Helicase ATP-binding domain is found at 164-334; sequence DVGRRHAPRV…FARLRLLDPN (171 aa). 177-184 is an ATP binding site; that stretch reads DEVGLGKT. Residues 280–283 carry the DEAH box motif; sequence DEAH. Residues 490-644 form the Helicase C-terminal domain; that stretch reads RVEWLMGYLT…TCPTGRAIYD (155 aa).

The protein belongs to the SNF2/RAD54 helicase family. RapA subfamily. As to quaternary structure, interacts with the RNAP. Has a higher affinity for the core RNAP than for the holoenzyme. Its ATPase activity is stimulated by binding to RNAP.

Transcription regulator that activates transcription by stimulating RNA polymerase (RNAP) recycling in case of stress conditions such as supercoiled DNA or high salt concentrations. Probably acts by releasing the RNAP, when it is trapped or immobilized on tightly supercoiled DNA. Does not activate transcription on linear DNA. Probably not involved in DNA repair. The polypeptide is RNA polymerase-associated protein RapA (Salmonella arizonae (strain ATCC BAA-731 / CDC346-86 / RSK2980)).